We begin with the raw amino-acid sequence, 751 residues long: Autophagy-related protein 9 (751 aa).

At Met-1 to Thr-21 the chain is on the cytoplasmic side. Residues Thr-22–Phe-42 form a helical membrane-spanning segment. Over Ser-43 to Thr-71 the chain is Lumenal. Residues Leu-72–Val-92 form a helical membrane-spanning segment. Topologically, residues Pro-93–Arg-276 are cytoplasmic. The stretch at Phe-277 to Ile-297 is an intramembrane region. Over Tyr-298–Arg-365 the chain is Cytoplasmic. The helical transmembrane segment at Phe-366 to Pro-386 threads the bilayer. Residues Asp-387–Arg-398 are Lumenal-facing. The helical transmembrane segment at Thr-399 to Pro-419 threads the bilayer. Topologically, residues Gln-420–Lys-465 are cytoplasmic. The stretch at Ile-466 to Ser-486 is an intramembrane region. At Leu-487 to Gln-751 the chain is on the cytoplasmic side. Disordered stretches follow at residues Asn-528–Ser-584 and Ala-676–Gln-751. Residues Asp-544–Ala-557 are compositionally biased toward gly residues. Polar residues predominate over residues Arg-563–Arg-576. 2 stretches are compositionally biased toward basic and acidic residues: residues Glu-708–Gly-727 and Glu-735–Gln-751.

Belongs to the ATG9 family. Homotrimer; forms a homotrimer with a central pore that forms a path between the two membrane leaflets. Post-translationally, phosphorylated by ATG1. ATG1 phosphorylation is required for preautophagosome elongation.

Its subcellular location is the preautophagosomal structure membrane. It is found in the cytoplasmic vesicle membrane. The protein resides in the golgi apparatus membrane. It localises to the endoplasmic reticulum membrane. The enzyme catalyses a 1,2-diacyl-sn-glycero-3-phosphocholine(in) = a 1,2-diacyl-sn-glycero-3-phosphocholine(out). It catalyses the reaction a 1,2-diacyl-sn-glycero-3-phospho-L-serine(in) = a 1,2-diacyl-sn-glycero-3-phospho-L-serine(out). It carries out the reaction a 1,2-diacyl-sn-glycero-3-phosphoethanolamine(in) = a 1,2-diacyl-sn-glycero-3-phosphoethanolamine(out). The catalysed reaction is a 1,2-diacyl-sn-glycero-3-phospho-(1D-myo-inositol-3-phosphate)(in) = a 1,2-diacyl-sn-glycero-3-phospho-(1D-myo-inositol-3-phosphate)(out). Phospholipid scramblase involved in autophagy and cytoplasm to vacuole transport (Cvt) vesicle formation. Cycles between the preautophagosomal structure/phagophore assembly site (PAS) and the cytoplasmic vesicle pool and supplies membrane for the growing autophagosome. Lipid scramblase activity plays a key role in preautophagosomal structure/phagophore assembly by distributing the phospholipids that arrive through ATG2 from the cytoplasmic to the luminal leaflet of the bilayer, thereby driving autophagosomal membrane expansion. Required for mitophagy. Also involved in endoplasmic reticulum-specific autophagic process and is essential for the survival of cells subjected to severe ER stress. Different machineries are required for anterograde trafficking to the PAS during either the Cvt pathway or bulk autophagy and for retrograde trafficking. The sequence is that of Autophagy-related protein 9 (ATG9) from Cryptococcus gattii (Filobasidiella gattii).